The chain runs to 262 residues: Small ribosomal subunit protein uS2 (262 aa).

Residues 224 to 262 (GKQGQDDAQQETADDNAANETVSEDSLKNLKNSVEGKED) are disordered.

Belongs to the universal ribosomal protein uS2 family.

The polypeptide is Small ribosomal subunit protein uS2 (Limosilactobacillus reuteri (strain DSM 20016) (Lactobacillus reuteri)).